The sequence spans 315 residues: D-alanine--D-alanine ligase (315 aa).

Positions 101–297 constitute an ATP-grasp domain; the sequence is KHIFRSLNID…FNELVKIIIE (197 aa). ATP is bound at residue 128-181; the sequence is KIDYPYVLKPINEGSSIGVYIIFSHEDYLELKNNSSTIMEKMIVEEYIPGIELH. Mg(2+)-binding residues include Asp249, Glu263, and Asn265.

This sequence belongs to the D-alanine--D-alanine ligase family. The cofactor is Mg(2+). Mn(2+) serves as cofactor.

Its subcellular location is the cytoplasm. It carries out the reaction 2 D-alanine + ATP = D-alanyl-D-alanine + ADP + phosphate + H(+). It participates in cell wall biogenesis; peptidoglycan biosynthesis. Cell wall formation. This Wolbachia pipientis wMel protein is D-alanine--D-alanine ligase.